Consider the following 506-residue polypeptide: Secreted RxLR effector protein 134 (506 aa).

Positions 1-19 are cleaved as a signal peptide; sequence MQGAYCVAVALLIAASGQA. The RxLR-dEER motif lies at 50–71; the sequence is RVLQVSHYPKDDLMLLAGNEER.

This sequence belongs to the RxLR effector family.

The protein localises to the secreted. Its subcellular location is the host nucleus. In terms of biological role, secreted effector that completely suppresses the host cell death induced by cell death-inducing proteins. This Plasmopara viticola (Downy mildew of grapevine) protein is Secreted RxLR effector protein 134.